The sequence spans 204 residues: MASVSSATFSGHGARSLLQFLRLVGQLKRVPRTGWVYRNVQRPESVSDHMYRMAVMAMVIKDDRLNKDRCVRLALVHDMAECIVGDIAPADNIPKEEKHRREEEAMKQITQLLPEDLRKELYELWEEYETQSSAEAKFVKQLDQCEMILQASEYEDLEHKPGRLQDFYDSTAGKFNHPEIVQLVSELEAERSTNIAAAASEPHS.

The residue at position 2 (alanine 2) is an N-acetylalanine. Serine 3 and serine 5 each carry phosphoserine. An HD domain is found at 46–148 (VSDHMYRMAV…VKQLDQCEMI (103 aa)). Histidine 49, histidine 77, aspartate 78, glutamate 81, aspartate 86, isoleucine 87, and aspartate 143 together coordinate a divalent metal cation. A Phosphoserine modification is found at serine 204.

It belongs to the HDDC2 family. In terms of assembly, homodimer. Mn(2+) is required as a cofactor. Co(2+) serves as cofactor. Requires Mg(2+) as cofactor.

It carries out the reaction a 2'-deoxyribonucleoside 5'-phosphate + H2O = a 2'-deoxyribonucleoside + phosphate. Its function is as follows. Catalyzes the dephosphorylation of the nucleoside 5'-monophosphates deoxyadenosine monophosphate (dAMP), deoxycytidine monophosphate (dCMP), deoxyguanosine monophosphate (dGMP) and deoxythymidine monophosphate (dTMP). In Homo sapiens (Human), this protein is 5'-deoxynucleotidase HDDC2 (HDDC2).